Reading from the N-terminus, the 227-residue chain is UPF0173 metal-dependent hydrolase BCAH187_A4741 (227 aa).

Belongs to the UPF0173 family.

This Bacillus cereus (strain AH187) protein is UPF0173 metal-dependent hydrolase BCAH187_A4741.